Reading from the N-terminus, the 78-residue chain is Large ribosomal subunit protein uL23 (78 aa).

Belongs to the universal ribosomal protein uL23 family. As to quaternary structure, part of the 50S ribosomal subunit. Contacts protein L29.

Binds to 23S rRNA. One of the proteins that surrounds the polypeptide exit tunnel on the outside of the ribosome. The chain is Large ribosomal subunit protein uL23 from Nanoarchaeum equitans (strain Kin4-M).